A 1136-amino-acid polypeptide reads, in one-letter code: Phytochrome (1136 aa).

The tract at residues 1 to 28 (MSTTRPRAATHSASSGSVSRSSKHSARV) is disordered. Positions 11–20 (HSASSGSVSR) are enriched in low complexity. Residues 231–414 (DIRLLCDTVV…VFGIQLNKEV (184 aa)) form the GAF domain. Cys-336 is a binding site for phytochromobilin. PAS domains follow at residues 629-699 (VTNE…LQGE) and 762-833 (DYRA…TKLR). One can recognise a Histidine kinase domain in the interval 913–1132 (YIRQEIRNPL…IINVEFPLAQ (220 aa)).

The protein belongs to the phytochrome family. In terms of assembly, homodimer. In terms of processing, contains one covalently linked phytochromobilin chromophore.

In terms of biological role, regulatory photoreceptor which exists in two forms that are reversibly interconvertible by light: the Pr form that absorbs maximally in the red region of the spectrum and the Pfr form that absorbs maximally in the far-red region. Photoconversion of Pr to Pfr induces an array of morphogenic responses, whereas reconversion of Pfr to Pr cancels the induction of those responses. Pfr controls the expression of a number of nuclear genes including those encoding the small subunit of ribulose-bisphosphate carboxylase, chlorophyll A/B binding protein, protochlorophyllide reductase, rRNA, etc. It also controls the expression of its own gene(s) in a negative feedback fashion. In Picea abies (Norway spruce), this protein is Phytochrome.